Reading from the N-terminus, the 90-residue chain is Probable Fe(2+)-trafficking protein (90 aa).

The protein belongs to the Fe(2+)-trafficking protein family.

Functionally, could be a mediator in iron transactions between iron acquisition and iron-requiring processes, such as synthesis and/or repair of Fe-S clusters in biosynthetic enzymes. This Idiomarina loihiensis (strain ATCC BAA-735 / DSM 15497 / L2-TR) protein is Probable Fe(2+)-trafficking protein.